Reading from the N-terminus, the 267-residue chain is 5'-nucleotidase SurE (267 aa).

Residues Asp-9, Asp-10, Ser-40, and Asn-97 each contribute to the a divalent metal cation site.

This sequence belongs to the SurE nucleotidase family. A divalent metal cation is required as a cofactor.

It localises to the cytoplasm. It carries out the reaction a ribonucleoside 5'-phosphate + H2O = a ribonucleoside + phosphate. In terms of biological role, nucleotidase that shows phosphatase activity on nucleoside 5'-monophosphates. The polypeptide is 5'-nucleotidase SurE (Helicobacter pylori (strain J99 / ATCC 700824) (Campylobacter pylori J99)).